A 229-amino-acid polypeptide reads, in one-letter code: Demethylmenaquinone methyltransferase (229 aa).

S-adenosyl-L-methionine contacts are provided by residues Thr57, Asp77, and 101-102 (DV).

Belongs to the class I-like SAM-binding methyltransferase superfamily. MenG/UbiE family.

The catalysed reaction is a 2-demethylmenaquinol + S-adenosyl-L-methionine = a menaquinol + S-adenosyl-L-homocysteine + H(+). It functions in the pathway quinol/quinone metabolism; menaquinone biosynthesis; menaquinol from 1,4-dihydroxy-2-naphthoate: step 2/2. Methyltransferase required for the conversion of demethylmenaquinol (DMKH2) to menaquinol (MKH2). The chain is Demethylmenaquinone methyltransferase from Chlamydia trachomatis serovar L2 (strain ATCC VR-902B / DSM 19102 / 434/Bu).